We begin with the raw amino-acid sequence, 204 residues long: Holliday junction branch migration complex subunit RuvA (204 aa).

Residues 1–63 are domain I; it reads MIGWLQGRVL…EDGQFLYGFS (63 aa). The interval 64–142 is domain II; the sequence is SFLQRQLFRE…KNDLFLCDES (79 aa). Residues 143–152 form a flexible linker region; that stretch reads ESSRAPIALS. The domain III stretch occupies residues 152 to 204; it reads SASEEAIQALIALELAPAEAELWVKKAQKTLAEDADSAALIKTAFALRLQGAK.

This sequence belongs to the RuvA family. Homotetramer. Forms an RuvA(8)-RuvB(12)-Holliday junction (HJ) complex. HJ DNA is sandwiched between 2 RuvA tetramers; dsDNA enters through RuvA and exits via RuvB. An RuvB hexamer assembles on each DNA strand where it exits the tetramer. Each RuvB hexamer is contacted by two RuvA subunits (via domain III) on 2 adjacent RuvB subunits; this complex drives branch migration. In the full resolvosome a probable DNA-RuvA(4)-RuvB(12)-RuvC(2) complex forms which resolves the HJ.

Its subcellular location is the cytoplasm. Its function is as follows. The RuvA-RuvB-RuvC complex processes Holliday junction (HJ) DNA during genetic recombination and DNA repair, while the RuvA-RuvB complex plays an important role in the rescue of blocked DNA replication forks via replication fork reversal (RFR). RuvA specifically binds to HJ cruciform DNA, conferring on it an open structure. The RuvB hexamer acts as an ATP-dependent pump, pulling dsDNA into and through the RuvAB complex. HJ branch migration allows RuvC to scan DNA until it finds its consensus sequence, where it cleaves and resolves the cruciform DNA. The protein is Holliday junction branch migration complex subunit RuvA of Dichelobacter nodosus (strain VCS1703A).